We begin with the raw amino-acid sequence, 313 residues long: Zinc transporter ZitB (313 aa).

Topologically, residues 1–20 (MAHSHSHTSSHLPEDNNARR) are cytoplasmic. The helical transmembrane segment at 21–41 (LLYAFGVTAGFMLVEVVGGFL) threads the bilayer. At 42-47 (SGSLAL) the chain is on the periplasmic side. The chain crosses the membrane as a helical span at residues 48–68 (LADAGHMLTDTAALLFALLAV). Residues 69–89 (QFSRRPPTIRHTFGWLRLTTL) are Cytoplasmic-facing. The chain crosses the membrane as a helical span at residues 90 to 110 (AAFVNAIALVVITILIVWEAI). The Periplasmic portion of the chain corresponds to 111–121 (ERFRTPRPVEG). A helical transmembrane segment spans residues 122–142 (GMMMAIAVAGLLANILSFWLL). At 143 to 159 (HHGSEEKNLNVRAAALH) the chain is on the cytoplasmic side. Residues 160–180 (VLGDLLGSVGAIIAALIIIWT) form a helical membrane-spanning segment. Residue Gly181 is a topological domain, periplasmic. The chain crosses the membrane as a helical span at residues 182 to 202 (WTPADPILSILVSLLVLRSAW). Topologically, residues 203–313 (RLLKDSVNEL…GVSGHSHHHH (111 aa)) are cytoplasmic.

It belongs to the cation diffusion facilitator (CDF) transporter (TC 2.A.4) family. SLC30A subfamily.

It is found in the cell inner membrane. In terms of biological role, involved in zinc efflux across the cytoplasmic membrane, thus reducing zinc accumulation in the cytoplasm and rendering bacteria more resistant to zinc. It may contribute to zinc homeostasis at low concentrations of zinc, whereas ZntA is required for growth at more toxic concentrations. The chain is Zinc transporter ZitB (zitB) from Escherichia coli (strain K12).